Reading from the N-terminus, the 116-residue chain is Aspartate 1-decarboxylase (116 aa).

Residue serine 25 is the Schiff-base intermediate with substrate; via pyruvic acid of the active site. Serine 25 is modified (pyruvic acid (Ser)). Threonine 57 is a binding site for substrate. Catalysis depends on tyrosine 58, which acts as the Proton donor. 73 to 75 serves as a coordination point for substrate; that stretch reads GAA.

It belongs to the PanD family. Heterooctamer of four alpha and four beta subunits. The cofactor is pyruvate. Is synthesized initially as an inactive proenzyme, which is activated by self-cleavage at a specific serine bond to produce a beta-subunit with a hydroxyl group at its C-terminus and an alpha-subunit with a pyruvoyl group at its N-terminus.

The protein localises to the cytoplasm. The enzyme catalyses L-aspartate + H(+) = beta-alanine + CO2. It functions in the pathway cofactor biosynthesis; (R)-pantothenate biosynthesis; beta-alanine from L-aspartate: step 1/1. Its function is as follows. Catalyzes the pyruvoyl-dependent decarboxylation of aspartate to produce beta-alanine. The protein is Aspartate 1-decarboxylase of Leptospira interrogans serogroup Icterohaemorrhagiae serovar Lai (strain 56601).